The chain runs to 385 residues: UPF0284 protein PMT9312_0438 (385 aa).

This sequence belongs to the UPF0284 family.

This Prochlorococcus marinus (strain MIT 9312) protein is UPF0284 protein PMT9312_0438.